The following is a 95-amino-acid chain: uncharacterized protein (95 aa).

The stretch at 60–89 (VKNMINRIVEELDKRIDEIKEGLNELEKSG) forms a coiled coil.

This is an uncharacterized protein from Sulfolobus islandicus filamentous virus (isolate Iceland/Hveragerdi) (SIFV).